The sequence spans 225 residues: NAD(P)H-quinone oxidoreductase subunit K, chloroplastic (225 aa).

Cys-43, Cys-44, Cys-108, and Cys-139 together coordinate [4Fe-4S] cluster.

It belongs to the complex I 20 kDa subunit family. NDH is composed of at least 16 different subunits, 5 of which are encoded in the nucleus. Requires [4Fe-4S] cluster as cofactor.

Its subcellular location is the plastid. The protein resides in the chloroplast thylakoid membrane. The catalysed reaction is a plastoquinone + NADH + (n+1) H(+)(in) = a plastoquinol + NAD(+) + n H(+)(out). It carries out the reaction a plastoquinone + NADPH + (n+1) H(+)(in) = a plastoquinol + NADP(+) + n H(+)(out). Functionally, NDH shuttles electrons from NAD(P)H:plastoquinone, via FMN and iron-sulfur (Fe-S) centers, to quinones in the photosynthetic chain and possibly in a chloroplast respiratory chain. The immediate electron acceptor for the enzyme in this species is believed to be plastoquinone. Couples the redox reaction to proton translocation, and thus conserves the redox energy in a proton gradient. This is NAD(P)H-quinone oxidoreductase subunit K, chloroplastic from Nuphar advena (Common spatterdock).